We begin with the raw amino-acid sequence, 357 residues long: Thiamine thiazole synthase 1, chloroplastic (357 aa).

Residues 1 to 51 (MSISAAGVATGLGANVELKSNVGSSSSSVAGVRLFTSRKAQLRRCAAPATS) constitute a chloroplast transit peptide. Substrate is bound by residues Ala-103, 123–124 (EQ), Gly-131, and Ala-196. Position 225 is a 2,3-didehydroalanine (Cys) (Cys-225). Residues Asp-227, His-242, Met-294, and 304–306 (RMG) contribute to the substrate site.

Belongs to the THI4 family. As to quaternary structure, homooctamer. The cofactor is Fe cation. Post-translationally, during the catalytic reaction, a sulfide is transferred from Cys-225 to a reaction intermediate, generating a dehydroalanine residue.

Its subcellular location is the plastid. It is found in the chloroplast. It carries out the reaction [ADP-thiazole synthase]-L-cysteine + glycine + NAD(+) = [ADP-thiazole synthase]-dehydroalanine + ADP-5-ethyl-4-methylthiazole-2-carboxylate + nicotinamide + 3 H2O + 2 H(+). In terms of biological role, involved in biosynthesis of the thiamine precursor thiazole. Catalyzes the conversion of NAD and glycine to adenosine diphosphate 5-(2-hydroxyethyl)-4-methylthiazole-2-carboxylic acid (ADT), an adenylated thiazole intermediate. The reaction includes an iron-dependent sulfide transfer from a conserved cysteine residue of the protein to a thiazole intermediate. The enzyme can only undergo a single turnover, which suggests it is a suicide enzyme. May have additional roles in adaptation to various stress conditions and in DNA damage tolerance. This is Thiamine thiazole synthase 1, chloroplastic from Physcomitrium patens (Spreading-leaved earth moss).